A 773-amino-acid polypeptide reads, in one-letter code: Circadian clock protein PASD1 (773 aa).

One can recognise a PAS domain in the interval 30-102 (YDYFNQVTLQ…IILKFPLLNS (73 aa)). Positions 313-361 (SVDQEGPMDQQDPENPVAPLDQAGLMDPVDPEDSVDLGAAGASAQPLQP) are disordered. The tract at residues 365 to 412 (VAYDIISQELELMKKLKEQLEERTWLLHDAIQNQQNALELMMDHLQKQ) is necessary for transcriptional repression. A coiled-coil region spans residues 365–412 (VAYDIISQELELMKKLKEQLEERTWLLHDAIQNQQNALELMMDHLQKQ). Disordered stretches follow at residues 427-448 (SEAV…PLPH), 506-569 (QRKV…QLQE), and 732-773 (GVEG…NKPC). Positions 475–553 (VAFNQQQLVQ…QERKKWQGQM (79 aa)) form a coiled coil. Residues 506–536 (QRKVQKQKKMQEKKKLQEQKMQEKKKLQEQR) show a composition bias toward basic and acidic residues.

In terms of assembly, interacts with the CLOCK-BMAL1 heterodimer; this interaction inhibits CLOCK-BMAL1 transcriptional activation and suppress circadian timekeeping. Interacts with BMAL1. Testis-specific. Expressed in a broad range of cancer cells, including melanoma, lung cancer, and breast cancer (at protein level). Testis-specific. Found in histologically normal tissues from patients with uterus, lung and small intestine cancers. Widespread expression seen in solid tumors and diffuse large B-cell lymphoma (DLBCL)-derived cell lines. Isoform 2 is expressed in all DLBCL-derived cell lines, while isoform 1 is preferentially expressed in cell lines derived from non-germinal center DLBCL.

The protein resides in the nucleus. Functionally, functions as a suppressor of the biological clock that drives the daily circadian rhythms of cells throughout the body. Acts as a nuclear repressor of the CLOCK-BMAL1 heterodimer-mediated transcriptional activation of the core clock components. Inhibits circadian clock function in cancer cells, when overexpressed. This chain is Circadian clock protein PASD1, found in Homo sapiens (Human).